A 190-amino-acid polypeptide reads, in one-letter code: Putative serine carboxypeptidase-like 54 (190 aa).

The first 25 residues, 1-25, serve as a signal peptide directing secretion; sequence MATKTFSLPFLLIVCIFSQLSSTFG. Residues Asn58, Asn59, and Asn105 are each glycosylated (N-linked (GlcNAc...) asparagine).

Belongs to the peptidase S10 family.

It localises to the secreted. The protein is Putative serine carboxypeptidase-like 54 (SCPL54) of Arabidopsis thaliana (Mouse-ear cress).